The sequence spans 556 residues: Phosphoenolpyruvate-protein phosphotransferase (556 aa).

The active-site Tele-phosphohistidine intermediate is the His186. 2 residues coordinate phosphoenolpyruvate: Arg288 and Arg325. 2 residues coordinate Mg(2+): Glu415 and Asp439. Residues 438–439 and Arg449 contribute to the phosphoenolpyruvate site; that span reads ND. Cys486 functions as the Proton donor in the catalytic mechanism.

It belongs to the PEP-utilizing enzyme family. As to quaternary structure, homodimer. The cofactor is Mg(2+).

The protein localises to the cytoplasm. The catalysed reaction is L-histidyl-[protein] + phosphoenolpyruvate = N(pros)-phospho-L-histidyl-[protein] + pyruvate. In terms of biological role, general (non sugar-specific) component of the phosphoenolpyruvate-dependent sugar phosphotransferase system (sugar PTS). This major carbohydrate active-transport system catalyzes the phosphorylation of incoming sugar substrates concomitantly with their translocation across the cell membrane. Enzyme I transfers the phosphoryl group from phosphoenolpyruvate (PEP) to the phosphoryl carrier protein (HPr). This is Phosphoenolpyruvate-protein phosphotransferase (ptsI) from Streptomyces coelicolor (strain ATCC BAA-471 / A3(2) / M145).